Consider the following 141-residue polypeptide: Large ribosomal subunit protein uL11 (141 aa).

It belongs to the universal ribosomal protein uL11 family. As to quaternary structure, part of the ribosomal stalk of the 50S ribosomal subunit. Interacts with L10 and the large rRNA to form the base of the stalk. L10 forms an elongated spine to which L12 dimers bind in a sequential fashion forming a multimeric L10(L12)X complex. Post-translationally, one or more lysine residues are methylated.

Its function is as follows. Forms part of the ribosomal stalk which helps the ribosome interact with GTP-bound translation factors. The protein is Large ribosomal subunit protein uL11 of Levilactobacillus brevis (strain ATCC 367 / BCRC 12310 / CIP 105137 / JCM 1170 / LMG 11437 / NCIMB 947 / NCTC 947) (Lactobacillus brevis).